The chain runs to 239 residues: Ribonuclease 3 (239 aa).

One can recognise an RNase III domain in the interval 12–137 (RLTLEAAIGH…LIAALYLDGG (126 aa)). Glu-50 serves as a coordination point for Mg(2+). The active site involves Asp-54. Positions 123 and 126 each coordinate Mg(2+). The active site involves Glu-126. One can recognise a DRBM domain in the interval 162–231 (DAKTELQEWA…ATRILEREGI (70 aa)).

It belongs to the ribonuclease III family. In terms of assembly, homodimer. The cofactor is Mg(2+).

The protein localises to the cytoplasm. It catalyses the reaction Endonucleolytic cleavage to 5'-phosphomonoester.. Digests double-stranded RNA. Involved in the processing of primary rRNA transcript to yield the immediate precursors to the large and small rRNAs (23S and 16S). Processes some mRNAs, and tRNAs when they are encoded in the rRNA operon. Processes pre-crRNA and tracrRNA of type II CRISPR loci if present in the organism. The protein is Ribonuclease 3 of Rhizobium rhizogenes (strain K84 / ATCC BAA-868) (Agrobacterium radiobacter).